We begin with the raw amino-acid sequence, 311 residues long: Malate dehydrogenase (311 aa).

NAD(+) contacts are provided by residues 7-12 (GAGNVG) and D32. R82 and R88 together coordinate substrate. NAD(+) contacts are provided by residues N95 and 118–120 (VSN). 2 residues coordinate substrate: N120 and R151. Residue H175 is the Proton acceptor of the active site.

It belongs to the LDH/MDH superfamily. MDH type 3 family.

It catalyses the reaction (S)-malate + NAD(+) = oxaloacetate + NADH + H(+). In terms of biological role, catalyzes the reversible oxidation of malate to oxaloacetate. The sequence is that of Malate dehydrogenase from Flavobacterium johnsoniae (strain ATCC 17061 / DSM 2064 / JCM 8514 / BCRC 14874 / CCUG 350202 / NBRC 14942 / NCIMB 11054 / UW101) (Cytophaga johnsonae).